Consider the following 706-residue polypeptide: Ribosomal RNA large subunit methyltransferase K/L (706 aa).

Residues 43–154 (LMYQSLLWSR…RDMASVALDL (112 aa)) form the THUMP domain.

Belongs to the methyltransferase superfamily. RlmKL family.

Its subcellular location is the cytoplasm. The enzyme catalyses guanosine(2445) in 23S rRNA + S-adenosyl-L-methionine = N(2)-methylguanosine(2445) in 23S rRNA + S-adenosyl-L-homocysteine + H(+). It catalyses the reaction guanosine(2069) in 23S rRNA + S-adenosyl-L-methionine = N(2)-methylguanosine(2069) in 23S rRNA + S-adenosyl-L-homocysteine + H(+). Its function is as follows. Specifically methylates the guanine in position 2445 (m2G2445) and the guanine in position 2069 (m7G2069) of 23S rRNA. The protein is Ribosomal RNA large subunit methyltransferase K/L of Yersinia pestis bv. Antiqua (strain Antiqua).